The chain runs to 507 residues: Cytochrome P450 52A7 (507 aa).

Residues 6 to 26 (LHYWYYVLPAFIIFHWIVSAI) traverse the membrane as a helical segment. Heme is bound at residue cysteine 456.

This sequence belongs to the cytochrome P450 family. The cofactor is heme.

It is found in the membrane. Functionally, together with an NADPH cytochrome P450 the enzyme system catalyzes the terminal hydroxylation as the first step in the assimilation of alkanes and fatty acids. Preferentially hydroxylates lauric acid. The chain is Cytochrome P450 52A7 (CYP52A7) from Candida tropicalis (Yeast).